Consider the following 379-residue polypeptide: Cytochrome b (379 aa).

4 helical membrane-spanning segments follow: residues 33–53 (FGSL…FLAM), 77–98 (WLIR…FIHV), 113–133 (WNIG…GYVL), and 178–198 (FFAF…VHLL). Residues histidine 83 and histidine 97 each coordinate heme b. Heme b contacts are provided by histidine 182 and histidine 196. Histidine 201 serves as a coordination point for a ubiquinone. The next 4 helical transmembrane spans lie at 226-246 (IKDL…ALFF), 288-308 (LGGV…PLLN), 320-340 (ITQI…WIGG), and 347-367 (FTMI…ILMP).

Belongs to the cytochrome b family. In terms of assembly, the cytochrome bc1 complex contains 11 subunits: 3 respiratory subunits (MT-CYB, CYC1 and UQCRFS1), 2 core proteins (UQCRC1 and UQCRC2) and 6 low-molecular weight proteins (UQCRH/QCR6, UQCRB/QCR7, UQCRQ/QCR8, UQCR10/QCR9, UQCR11/QCR10 and a cleavage product of UQCRFS1). This cytochrome bc1 complex then forms a dimer. Heme b is required as a cofactor.

It is found in the mitochondrion inner membrane. Its function is as follows. Component of the ubiquinol-cytochrome c reductase complex (complex III or cytochrome b-c1 complex) that is part of the mitochondrial respiratory chain. The b-c1 complex mediates electron transfer from ubiquinol to cytochrome c. Contributes to the generation of a proton gradient across the mitochondrial membrane that is then used for ATP synthesis. This is Cytochrome b (MT-CYB) from Akodon dayi (Day's grass mouse).